The chain runs to 447 residues: Probable alpha-galactosidase B (447 aa).

Residues 1–22 (MTTFLSLTTAAAVLTLARGSNA) form the signal peptide. Disulfide bonds link Cys-45–Cys-77 and Cys-127–Cys-157. Asp-155 acts as the Nucleophile in catalysis. 2 N-linked (GlcNAc...) asparagine glycosylation sites follow: Asn-162 and Asn-180. 225–229 (NWGQA) provides a ligand contact to substrate. Asn-236 carries N-linked (GlcNAc...) asparagine glycosylation. Residue Asp-247 is the Proton donor of the active site. N-linked (GlcNAc...) asparagine glycosylation is present at Asn-286.

This sequence belongs to the glycosyl hydrolase 27 family.

The protein localises to the secreted. It catalyses the reaction Hydrolysis of terminal, non-reducing alpha-D-galactose residues in alpha-D-galactosides, including galactose oligosaccharides, galactomannans and galactolipids.. Hydrolyzes a variety of simple alpha-D-galactoside as well as more complex molecules such as oligosaccharides and polysaccharides. In Neosartorya fischeri (strain ATCC 1020 / DSM 3700 / CBS 544.65 / FGSC A1164 / JCM 1740 / NRRL 181 / WB 181) (Aspergillus fischerianus), this protein is Probable alpha-galactosidase B (aglB).